Here is a 334-residue protein sequence, read N- to C-terminus: Glyceraldehyde-3-phosphate dehydrogenase 1 (334 aa).

Residues 11–12, Asp-33, Arg-77, and Ser-119 contribute to the NAD(+) site; that span reads RI. D-glyceraldehyde 3-phosphate is bound by residues 150 to 152 and Thr-181; that span reads SCT. Residue Cys-151 is the Nucleophile of the active site. An NAD(+)-binding site is contributed by Asn-182. D-glyceraldehyde 3-phosphate contacts are provided by residues Arg-196, 209 to 210, and Arg-232; that span reads TG. Asn-314 contacts NAD(+).

This sequence belongs to the glyceraldehyde-3-phosphate dehydrogenase family. As to quaternary structure, homotetramer.

The protein localises to the cytoplasm. It carries out the reaction D-glyceraldehyde 3-phosphate + phosphate + NAD(+) = (2R)-3-phospho-glyceroyl phosphate + NADH + H(+). The protein operates within carbohydrate degradation; glycolysis; pyruvate from D-glyceraldehyde 3-phosphate: step 1/5. Functionally, catalyzes the oxidative phosphorylation of glyceraldehyde 3-phosphate (G3P) to 1,3-bisphosphoglycerate (BPG) using the cofactor NAD. The first reaction step involves the formation of a hemiacetal intermediate between G3P and a cysteine residue, and this hemiacetal intermediate is then oxidized to a thioester, with concomitant reduction of NAD to NADH. The reduced NADH is then exchanged with the second NAD, and the thioester is attacked by a nucleophilic inorganic phosphate to produce BPG. In Bacillus cereus, this protein is Glyceraldehyde-3-phosphate dehydrogenase 1 (gap1).